Reading from the N-terminus, the 629-residue chain is MKPYPFSAIVGHDRLRLALLLCAVRPEIGGALIRGEKGTAKSTAVRGLAALLSVATGSTETGLVELPLGATEDRVVGSLDLQRVMRDGEHAFSPGLLARAHGGVLYVDEVNLLHDHLVDILLDAAAMGRVHVERDGISHSHEARFVLIGTMNPEEGELRPQLLDRFGLTVDVQASRDIDVRVQVIRRRMAYEADPDAFVARYADADAELAHRIAAARATVDDVVLGDNELRRIAALCAAFDVDGMRADLVVARTAAAHAAWRGVRTVEEQDIRAAAELALPHRRRRDPFDDHGIDRDQLDEALALASVDPEPEPDPPGGGQSANEPASQPNSRSKSTEPGAPSSMGDDPPRPASPRLRSSPRPSAPPSKIFRTRALRVPGVGTGAPGRRSRARNASGSVVAAAEVSDPDAHGLHLFATLLAAGERAFGAGPLRPWPDDVRRAIREGREGNLVIFVVDASGSMAARDRMAAVSGATLSLLRDAYQRRDKVAVITFRQHEATLLLSPTSSAHIAGRRLARFSTGGKTPLAEGLLAARALIIREKVRDRARRPLVVVLTDGRATAGPDPLGRSRTAAAGLVAEGAAAVVVDCETSYVRLGLAAQLARQLGAPVVRLEQLHADYLVHAVRGVA.

M1 is subject to N-acetylmethionine. The segment at 308–395 is disordered; it reads VDPEPEPDPP…PGRRSRARNA (88 aa). Positions 322 to 334 are enriched in polar residues; that stretch reads SANEPASQPNSRS. Positions 451–587 constitute a VWFA domain; the sequence is LVIFVVDASG…VAEGAAAVVV (137 aa).

It belongs to the Mg-chelatase subunits D/I family.

This is an uncharacterized protein from Mycobacterium tuberculosis (strain ATCC 25618 / H37Rv).